A 213-amino-acid polypeptide reads, in one-letter code: NAD(P)H-hydrate epimerase (213 aa).

A YjeF N-terminal domain is found at 8–210 (MYNIEENGHA…KIGIPPEAEK (203 aa)). 55–59 (NNGGD) contacts (6S)-NADPHX. N56 and D122 together coordinate K(+). Residues 126 to 132 (GTGITGE), Y137, and D155 each bind (6S)-NADPHX. A K(+)-binding site is contributed by S158.

This sequence belongs to the NnrE/AIBP family. The cofactor is K(+).

It carries out the reaction (6R)-NADHX = (6S)-NADHX. It catalyses the reaction (6R)-NADPHX = (6S)-NADPHX. In terms of biological role, catalyzes the epimerization of the S- and R-forms of NAD(P)HX, a damaged form of NAD(P)H that is a result of enzymatic or heat-dependent hydration. This is a prerequisite for the S-specific NAD(P)H-hydrate dehydratase to allow the repair of both epimers of NAD(P)HX. This chain is NAD(P)H-hydrate epimerase, found in Cenarchaeum symbiosum (strain A).